We begin with the raw amino-acid sequence, 990 residues long: Aconitate hydratase 3, mitochondrial (990 aa).

Residues 1–78 (MYLTASSSAS…PFRFTSQIRA (78 aa)) constitute a mitochondrion transit peptide. At S91 the chain carries Phosphoserine. Substrate contacts are provided by residues Q182 and 301-303 (DSH). [4Fe-4S] cluster contacts are provided by C533, C599, and C602. Substrate-binding positions include R632, R637, R795, and 876 to 877 (SR).

Belongs to the aconitase/IPM isomerase family. As to quaternary structure, monomer. Interacts with B'GAMMA in the cytosol. [4Fe-4S] cluster serves as cofactor. In terms of processing, phosphorylated at Ser-91 in the cytoplasm; this phosphorylation requires the presence of B'GAMMA. As to expression, major aconitase isoenzyme in young seedlings. Expressed in roots, leaves, stems and flowers, and, at low levels, in seeds.

Its subcellular location is the mitochondrion. It localises to the cytoplasm. It catalyses the reaction citrate = D-threo-isocitrate. The protein operates within carbohydrate metabolism; tricarboxylic acid cycle; isocitrate from oxaloacetate: step 2/2. Its function is as follows. Catalyzes the isomerization of citrate to isocitrate via cis-aconitate. Contributes to oxidative stress tolerance. Modulates cytosolic citrate metabolism during lipid mobilization. Required during seedling growth. This chain is Aconitate hydratase 3, mitochondrial, found in Arabidopsis thaliana (Mouse-ear cress).